Reading from the N-terminus, the 172-residue chain is MKLGIVIFPSKMIQDKANGLRKRYDPHYALVPPHITLKTPFETQDEQLESIVNKLHTIASKTNPFTLHVGKVGSFAPVNNVIYFKVEKTPELTFLNEEMHSGFFTQEREYAFVPHLTIGQGLSDAEHADVLGRLRMKDFYYEQPIDRFHLLYQLENGTWTVHETFRLGKGNN.

The active-site Proton donor is H34. 2 short sequence motifs (HXTX) span residues H34 to L37 and H115 to I118. H115 acts as the Proton acceptor in catalysis.

Belongs to the 2H phosphoesterase superfamily. YjcG family.

The polypeptide is Putative phosphoesterase BAMEG_3349 (Bacillus anthracis (strain CDC 684 / NRRL 3495)).